A 396-amino-acid chain; its full sequence is Ornithine aminotransferase (396 aa).

N6-(pyridoxal phosphate)lysine is present on lysine 255.

Belongs to the class-III pyridoxal-phosphate-dependent aminotransferase family. OAT subfamily. Pyridoxal 5'-phosphate serves as cofactor.

It is found in the cytoplasm. It carries out the reaction a 2-oxocarboxylate + L-ornithine = L-glutamate 5-semialdehyde + an L-alpha-amino acid. It participates in amino-acid biosynthesis; L-proline biosynthesis; L-glutamate 5-semialdehyde from L-ornithine: step 1/1. Functionally, catalyzes the interconversion of ornithine to glutamate semialdehyde. In Staphylococcus epidermidis (strain ATCC 35984 / DSM 28319 / BCRC 17069 / CCUG 31568 / BM 3577 / RP62A), this protein is Ornithine aminotransferase.